Reading from the N-terminus, the 317-residue chain is Adenine deaminase (317 aa).

Zn(2+) is bound by residues histidine 14, histidine 16, and histidine 194. The Proton donor role is filled by glutamate 197. Aspartate 275 serves as a coordination point for Zn(2+). A substrate-binding site is contributed by aspartate 276.

This sequence belongs to the metallo-dependent hydrolases superfamily. Adenosine and AMP deaminases family. Adenine deaminase type 2 subfamily. The cofactor is Zn(2+).

It carries out the reaction adenine + H2O + H(+) = hypoxanthine + NH4(+). Functionally, catalyzes the hydrolytic deamination of adenine to hypoxanthine. Plays an important role in the purine salvage pathway and in nitrogen catabolism. In Bordetella bronchiseptica (strain ATCC BAA-588 / NCTC 13252 / RB50) (Alcaligenes bronchisepticus), this protein is Adenine deaminase.